The primary structure comprises 487 residues: MNPPSGPRTQEPSCVATPASPSRWDGYRSSTSSLDQPLPISPTAARAQAAAWIPFPTVDVPDHAHYTLGTVILLVGLTGILGNLMVIYTFCRSRGLRTPANMFIINLAVSDFFMSFTQAPVFFASSLHKRWLFGEAGCEFYAFCGALFGITSMITLMAIALDRYLVITHPLATIGVVSKRRAALVLLGVWLYALAWSLPPFFGWSAYVPEGLLTSCSWDYMSFTPSVRAYTMLLFCFVFFLPLLVIVYCYIFIFRAIRETGQALQTFRACEGGGRSPRQRQRLQREWKMAKIELLVILLFVLSWAPYSIVALMAFAGYAHVLTPYMNSVPAVIAKASAIHNPIIYAITHPKYRMAIAQHLPCLGVLLGVSGQHTGPYASYRSTHRSTLSSQASDLSWISGRRRQASLGSESEVGWMDTEAAAVWGAAQQVSGRFPCSQGLEDREAKAPVRPQGREAETPGQAMTMAMAPWDTPANCELPLHPGWAFH.

A disordered region spans residues 1 to 37 (MNPPSGPRTQEPSCVATPASPSRWDGYRSSTSSLDQP). Residues 1–67 (MNPPSGPRTQ…VDVPDHAHYT (67 aa)) are Extracellular-facing. The helical transmembrane segment at 68–88 (LGTVILLVGLTGILGNLMVIY) threads the bilayer. Residues 89–102 (TFCRSRGLRTPANM) are Cytoplasmic-facing. Residues 103-123 (FIINLAVSDFFMSFTQAPVFF) form a helical membrane-spanning segment. The Extracellular portion of the chain corresponds to 124-139 (ASSLHKRWLFGEAGCE). Cysteines 138 and 216 form a disulfide. A helical transmembrane segment spans residues 140–160 (FYAFCGALFGITSMITLMAIA). The Cytoplasmic segment spans residues 161-183 (LDRYLVITHPLATIGVVSKRRAA). A helical transmembrane segment spans residues 184–204 (LVLLGVWLYALAWSLPPFFGW). Topologically, residues 205-233 (SAYVPEGLLTSCSWDYMSFTPSVRAYTML) are extracellular. The helical transmembrane segment at 234-254 (LFCFVFFLPLLVIVYCYIFIF) threads the bilayer. The Cytoplasmic portion of the chain corresponds to 255-291 (RAIRETGQALQTFRACEGGGRSPRQRQRLQREWKMAK). A helical membrane pass occupies residues 292-312 (IELLVILLFVLSWAPYSIVAL). Residues 313-327 (MAFAGYAHVLTPYMN) lie on the Extracellular side of the membrane. A helical transmembrane segment spans residues 328-348 (SVPAVIAKASAIHNPIIYAIT). Lys335 is modified (N6-(retinylidene)lysine). The Cytoplasmic portion of the chain corresponds to 349–487 (HPKYRMAIAQ…LPLHPGWAFH (139 aa)). Residues 436–459 (CSQGLEDREAKAPVRPQGREAETP) form a disordered region. The segment covering 440-457 (LEDREAKAPVRPQGREAE) has biased composition (basic and acidic residues).

This sequence belongs to the G-protein coupled receptor 1 family. Opsin subfamily. In terms of tissue distribution, eye. Expression is restricted within the ganglion cell layer.

The protein resides in the cell membrane. It localises to the cell projection. The protein localises to the axon. Its subcellular location is the dendrite. It is found in the perikaryon. Its function is as follows. Photoreceptor that binds cis-retinaldehydes. Contributes to pupillar reflex, photoentrainment and other non-image forming responses to light. May be involved in the optokinetic visual tracking response. May be involved in the regulation of retinal hyaloid vessel growth and regression. The protein is Melanopsin (OPN4) of Felis catus (Cat).